Reading from the N-terminus, the 700-residue chain is Calpain-2 catalytic subunit (700 aa).

Ala-2 is modified (N-acetylalanine). A propeptide spans 2-19 (AGIAAKLAKDREAAEGLG) (anchors to the small subunit). The Calpain catalytic domain occupies 45-344 (LFQDPSFPAI…YSRLEICNLT (300 aa)). Ile-89, Gly-91, and Asp-96 together coordinate Ca(2+). Cys-105 is a catalytic residue. Ca(2+) contacts are provided by Glu-175, Gln-229, and Lys-230. Residues His-262 and Asn-286 contribute to the active site. Residues Glu-292, Asp-299, and Glu-323 each coordinate Ca(2+). The domain III stretch occupies residues 345–514 (PDTLTSDTYK…KKADYQAVDD (170 aa)). The interval 515–529 (EIEANLEEFDISEDD) is linker. A domain IV region spans residues 530 to 700 (IDDGFRRLFA…LISWLCFSVL (171 aa)). Residues Ala-542, Asp-545, Glu-547, Glu-552, Asp-585, Asp-587, Ser-589, Lys-591, Glu-596, Asp-615, Asp-617, Ser-619, Thr-621, Glu-626, Asp-658, and Asn-661 each coordinate Ca(2+). EF-hand domains follow at residues 572-605 (FSIETCKIMVDMLDSDGSGKLGLKEFYILWTKIQ) and 602-637 (TKIQKYQKIYREIDVDRSGTMNSYEMRKALEEAGFK). Residues 667–700 (VRLETLFKIFKQLDPENTGTIELDLISWLCFSVL) enclose the EF-hand 3 domain.

It belongs to the peptidase C2 family. In terms of assembly, forms a heterodimer with a small (regulatory) subunit (CAPNS1). Interacts with CPEB3; this leads to cleavage of CPEB3. Interacts with PIDD1 alternative open reading frame protein altPIDD1. The cofactor is Ca(2+). In terms of tissue distribution, ubiquitous.

Its subcellular location is the cytoplasm. The protein localises to the cell membrane. It catalyses the reaction Broad endopeptidase specificity.. Activated by 200-1000 micromolar concentrations of calcium and inhibited by calpastatin. Functionally, calcium-regulated non-lysosomal thiol-protease which catalyzes limited proteolysis of substrates involved in cytoskeletal remodeling and signal transduction. Proteolytically cleaves MYOC at 'Arg-226'. Proteolytically cleaves CPEB3 following neuronal stimulation which abolishes CPEB3 translational repressor activity, leading to translation of CPEB3 target mRNAs. In Homo sapiens (Human), this protein is Calpain-2 catalytic subunit (CAPN2).